We begin with the raw amino-acid sequence, 83 residues long: Mitochondrial import inner membrane translocase subunit Tim8 (83 aa).

The short motif at 35–60 (CWDVCFADYRPPSKMDGKTQTCIQNC) is the Twin CX3C motif element. Intrachain disulfides connect Cys35-Cys60 and Cys39-Cys56.

This sequence belongs to the small Tim family. Heterohexamer; composed of 3 copies of ddp-1/tim-8 and 3 copies of tin-13/tim-13, named soluble 70 kDa complex. Associates with the TIM22 complex, whose core is composed of tim-22.

It localises to the mitochondrion inner membrane. Its function is as follows. Mitochondrial intermembrane chaperone that participates in the import and insertion of some multi-pass transmembrane proteins into the mitochondrial inner membrane. Also required for the transfer of beta-barrel precursors from the TOM complex to the sorting and assembly machinery (SAM complex) of the outer membrane. Acts as a chaperone-like protein that protects the hydrophobic precursors from aggregation and guide them through the mitochondrial intermembrane space. The ddp-1/tim-8-tim-13 complex mediates the import of some proteins while the predominant tim-9/tin-9.1-tim-10/tin-10 70 kDa complex mediates the import of much more proteins. The polypeptide is Mitochondrial import inner membrane translocase subunit Tim8 (Caenorhabditis elegans).